Reading from the N-terminus, the 121-residue chain is Flagellar protein FliT (121 aa).

The required for homodimerization stretch occupies residues 1–50 (MNNAPHLYFAWQQLVEKSQLMLRLATEEQWDELIASEMAYVNAVQEIAHL). The fliD binding stretch occupies residues 60-98 (MQEQLRPMLLLILDNESKVKQLLQIRMDELAKLVGQSSV).

The protein belongs to the FliT family. In terms of assembly, homodimer. Interacts with FliD and FlhC.

The protein resides in the cytoplasm. Its subcellular location is the cytosol. Its function is as follows. Dual-function protein that regulates the transcription of class 2 flagellar operons and that also acts as an export chaperone for the filament-capping protein FliD. As a transcriptional regulator, acts as an anti-FlhDC factor; it directly binds FlhC, thus inhibiting the binding of the FlhC/FlhD complex to class 2 promoters, resulting in decreased expression of class 2 flagellar operons. As a chaperone, effects FliD transition to the membrane by preventing its premature polymerization, and by directing it to the export apparatus. This chain is Flagellar protein FliT, found in Escherichia coli O6:K15:H31 (strain 536 / UPEC).